A 461-amino-acid polypeptide reads, in one-letter code: 23S rRNA (uracil(1939)-C(5))-methyltransferase RlmD (461 aa).

The tract at residues 1-26 is disordered; it reads MAKHERGLRFQPTGGSKAPQIPTGKK. The TRAM domain maps to 20–78; that stretch reads QIPTGKKQRLSIERLANDGRGIAFFEGKTWFVLGALAGEEVEARVLGAHGKVVEARTER. [4Fe-4S] cluster contacts are provided by cysteine 91, cysteine 97, cysteine 100, and cysteine 179. S-adenosyl-L-methionine-binding residues include glutamine 283, phenylalanine 312, asparagine 317, glutamate 333, aspartate 360, and aspartate 381. Cysteine 407 (nucleophile) is an active-site residue.

Belongs to the class I-like SAM-binding methyltransferase superfamily. RNA M5U methyltransferase family. RlmD subfamily.

The catalysed reaction is uridine(1939) in 23S rRNA + S-adenosyl-L-methionine = 5-methyluridine(1939) in 23S rRNA + S-adenosyl-L-homocysteine + H(+). Catalyzes the formation of 5-methyl-uridine at position 1939 (m5U1939) in 23S rRNA. The polypeptide is 23S rRNA (uracil(1939)-C(5))-methyltransferase RlmD (Pseudomonas fluorescens (strain Pf0-1)).